We begin with the raw amino-acid sequence, 598 residues long: Probable translation initiation factor IF-2 (598 aa).

The tr-type G domain occupies 3–225; that stretch reads LRCPIVSVLG…GLAQKFLEQK (223 aa). The segment at 12-19 is G1; the sequence is GHVDHGKT. 12–19 contributes to the GTP binding site; that stretch reads GHVDHGKT. The tract at residues 37 to 41 is G2; that stretch reads GITQH. The tract at residues 76–79 is G3; sequence DTPG. Residues 76 to 80 and 130 to 133 each bind GTP; these read DTPGH and NKVD. Residues 130-133 are G4; the sequence is NKVD. Residues 200 to 202 form a G5 region; sequence SAM.

It belongs to the TRAFAC class translation factor GTPase superfamily. Classic translation factor GTPase family. IF-2 subfamily.

Function in general translation initiation by promoting the binding of the formylmethionine-tRNA to ribosomes. Seems to function along with eIF-2. This chain is Probable translation initiation factor IF-2, found in Methanococcus maripaludis (strain C7 / ATCC BAA-1331).